The following is a 568-amino-acid chain: COMPASS component cclA (568 aa).

A disordered region spans residues 1 to 113 (MASDSGTPPP…MRYKLAPPKP (113 aa)). Basic and acidic residues-rich tracts occupy residues 68–77 (KESLKKRESK) and 89–98 (PDPKHREPKQ). The B30.2/SPRY domain maps to 160–353 (ADPGFPSSLY…IPIRFKQHIY (194 aa)).

The protein belongs to the cclA family. In terms of assembly, component of the COMPASS complex.

The protein resides in the nucleus. It localises to the chromosome. The protein localises to the telomere. In terms of biological role, component of the COMPASS (Set1C) complex that specifically mono-, di- and trimethylates histone H3 to form H3K4me1/2/3, which subsequently plays a role in telomere length maintenance and transcription elongation regulation. Controls the production of several secondary metabolites, including colletochlorins, higginsianins and sclerosporide. Plays a key role in mycelial growth, sporulation, spore germination and virulence. In Colletotrichum higginsianum (strain IMI 349063) (Crucifer anthracnose fungus), this protein is COMPASS component cclA.